The primary structure comprises 539 residues: Nucleobase-ascorbate transporter 8 (539 aa).

The tract at residues 1–20 (MAGDGVENAKPPQKQEDLQP) is disordered. Transmembrane regions (helical) follow at residues 44–64 (ILLG…IPTM), 79–99 (LIQT…FFGT), 101–121 (LPAV…IVLA), 141–161 (IQGA…SGLW), 167–187 (FLSP…LYEQ), 189–209 (FPML…LVIF), 229–249 (FAVI…TIGG), 295–315 (IFAM…TYIA), 368–388 (VGSR…SILG), 399–421 (APIV…LSLI), 433–453 (FILG…YQYT), and 470–490 (NIIN…AFFL).

The protein belongs to the nucleobase:cation symporter-2 (NCS2) (TC 2.A.40) family. As to expression, highly expressed in ovules, endosperm and embryo.

The protein resides in the cell membrane. This Arabidopsis thaliana (Mouse-ear cress) protein is Nucleobase-ascorbate transporter 8 (NAT8).